The following is a 182-amino-acid chain: Large ribosomal subunit protein uL16 (182 aa).

Belongs to the universal ribosomal protein uL16 family. In terms of assembly, part of the 50S ribosomal subunit.

This Thermococcus kodakarensis (strain ATCC BAA-918 / JCM 12380 / KOD1) (Pyrococcus kodakaraensis (strain KOD1)) protein is Large ribosomal subunit protein uL16.